The sequence spans 457 residues: Transcription factor PCF7 (457 aa).

Residues 58 to 84 (STLHYLLQEKERAQQAHEQLQIYQQQQ) are a coiled coil. Residues 95-121 (RQPASRGPGGGGGGGDGGGSSGESTPV) form a disordered region. Residues 101–115 (GPGGGGGGGDGGGSS) are compositionally biased toward gly residues. A TCP domain is found at 140–198 (RKDRHSKVCTARGLRDRRVRLAAHTAIRFYDVQDRLGYDRPSKAVDWLMRNAKAAIDEL). 2 disordered regions span residues 199–231 (PDRA…GFGN) and 263–299 (KSLF…SNQQ). Positions 212-230 (STEQPEGTEQANSTSYGFG) are enriched in polar residues. Positions 268-278 (SSSTASGAASA) are enriched in low complexity.

In terms of assembly, forms homodimers and heterodimers.

It localises to the nucleus. Its function is as follows. Transcription activator. Binds the promoter core sequence 5'-GGNCC-3'. In Oryza sativa subsp. indica (Rice), this protein is Transcription factor PCF7 (PCF7).